The primary structure comprises 63 residues: Small ribosomal subunit protein eS17 (63 aa).

It belongs to the eukaryotic ribosomal protein eS17 family.

The chain is Small ribosomal subunit protein eS17 from Methanococcus maripaludis (strain DSM 14266 / JCM 13030 / NBRC 101832 / S2 / LL).